We begin with the raw amino-acid sequence, 519 residues long: Laccase-2 (519 aa).

The signal sequence occupies residues 1–20; it reads MGLQRFSFFVTLALVARSLA. Plastocyanin-like domains are found at residues 22 to 147 and 159 to 301; these read IGPV…FVVY and VDNE…ILRY. Asparagine 74 is a glycosylation site (N-linked (GlcNAc...) asparagine). Residues histidine 84, histidine 86, histidine 129, and histidine 131 each coordinate Cu cation. Cystine bridges form between cysteine 105/cysteine 508 and cysteine 137/cysteine 225. 6 N-linked (GlcNAc...) asparagine glycosylation sites follow: asparagine 161, asparagine 228, asparagine 237, asparagine 271, asparagine 353, and asparagine 361. The Plastocyanin-like 3 domain maps to 368–490; that stretch reads TVPVLLQILS…AGFAIVFAED (123 aa). Cu cation contacts are provided by histidine 415, histidine 418, histidine 420, histidine 472, cysteine 473, histidine 474, and histidine 478.

It belongs to the multicopper oxidase family. As to quaternary structure, homodimer. The cofactor is Cu cation.

The protein localises to the secreted. It carries out the reaction 4 hydroquinone + O2 = 4 benzosemiquinone + 2 H2O. Functionally, lignin degradation and detoxification of lignin-derived products. This Trametes villosa (White-rot fungus) protein is Laccase-2.